Here is a 688-residue protein sequence, read N- to C-terminus: Polyribonucleotide nucleotidyltransferase (688 aa).

The Mg(2+) site is built by D484 and D490. One can recognise a KH domain in the interval 550-609 (PQTEIFNVAPDKIIEIIGQGGRVIKEIVEKFEVKIDLNTPSGEVKIMGNKERVLKTKEFI). The region spanning 626–688 (DEVLEAQVKR…NKGKIALDLA (63 aa)) is the S1 motif domain.

Belongs to the polyribonucleotide nucleotidyltransferase family. Mg(2+) serves as cofactor.

Its subcellular location is the cytoplasm. It catalyses the reaction RNA(n+1) + phosphate = RNA(n) + a ribonucleoside 5'-diphosphate. Functionally, involved in mRNA degradation. Catalyzes the phosphorolysis of single-stranded polyribonucleotides processively in the 3'- to 5'-direction. This is Polyribonucleotide nucleotidyltransferase from Helicobacter pylori (strain J99 / ATCC 700824) (Campylobacter pylori J99).